The sequence spans 620 residues: Guanylate cyclase soluble subunit beta-1 (620 aa).

Histidine 105 contacts heme. The 134-residue stretch at threonine 421–glutamate 554 folds into the Guanylate cyclase domain.

This sequence belongs to the adenylyl cyclase class-4/guanylyl cyclase family. As to quaternary structure, the active enzyme is formed by a heterodimer of an alpha and a beta subunit. Heterodimer with GUCY1A1. Can also form inactive homodimers in vitro. Heme is required as a cofactor.

The protein localises to the cytoplasm. It carries out the reaction GTP = 3',5'-cyclic GMP + diphosphate. With respect to regulation, activated by nitric oxide in the presence of magnesium or manganese ions. In terms of biological role, mediates responses to nitric oxide (NO) by catalyzing the biosynthesis of the signaling molecule cGMP. This is Guanylate cyclase soluble subunit beta-1 (Gucy1b1) from Mus musculus (Mouse).